The chain runs to 217 residues: Probable transaldolase (217 aa).

Residue Lys83 is the Schiff-base intermediate with substrate of the active site.

It belongs to the transaldolase family. Type 3B subfamily.

The protein localises to the cytoplasm. The catalysed reaction is D-sedoheptulose 7-phosphate + D-glyceraldehyde 3-phosphate = D-erythrose 4-phosphate + beta-D-fructose 6-phosphate. It participates in carbohydrate degradation; pentose phosphate pathway; D-glyceraldehyde 3-phosphate and beta-D-fructose 6-phosphate from D-ribose 5-phosphate and D-xylulose 5-phosphate (non-oxidative stage): step 2/3. Transaldolase is important for the balance of metabolites in the pentose-phosphate pathway. The polypeptide is Probable transaldolase (Paracoccus denitrificans (strain Pd 1222)).